A 321-amino-acid polypeptide reads, in one-letter code: Aspartate carbamoyltransferase catalytic subunit (321 aa).

Carbamoyl phosphate-binding residues include R65 and T66. Residue K93 coordinates L-aspartate. Residues R115, H143, and Q146 each coordinate carbamoyl phosphate. The L-aspartate site is built by R176 and R230. Carbamoyl phosphate contacts are provided by G271 and P272.

It belongs to the aspartate/ornithine carbamoyltransferase superfamily. ATCase family. In terms of assembly, heterododecamer (2C3:3R2) of six catalytic PyrB chains organized as two trimers (C3), and six regulatory PyrI chains organized as three dimers (R2).

The enzyme catalyses carbamoyl phosphate + L-aspartate = N-carbamoyl-L-aspartate + phosphate + H(+). It functions in the pathway pyrimidine metabolism; UMP biosynthesis via de novo pathway; (S)-dihydroorotate from bicarbonate: step 2/3. Its function is as follows. Catalyzes the condensation of carbamoyl phosphate and aspartate to form carbamoyl aspartate and inorganic phosphate, the committed step in the de novo pyrimidine nucleotide biosynthesis pathway. The sequence is that of Aspartate carbamoyltransferase catalytic subunit from Bartonella bacilliformis (strain ATCC 35685 / KC583 / Herrer 020/F12,63).